The following is a 141-amino-acid chain: Terrelysin (141 aa).

It belongs to the aegerolysin family.

It is found in the cytoplasm. Functionally, hemolysins are potential virulence factors. Has hemolytic activity against sheep erythrocytes in vitro. This is Terrelysin from Aspergillus terreus (strain NIH 2624 / FGSC A1156).